A 303-amino-acid polypeptide reads, in one-letter code: Glycine--tRNA ligase alpha subunit (303 aa).

This sequence belongs to the class-II aminoacyl-tRNA synthetase family. Tetramer of two alpha and two beta subunits.

It is found in the cytoplasm. It carries out the reaction tRNA(Gly) + glycine + ATP = glycyl-tRNA(Gly) + AMP + diphosphate. This Salmonella agona (strain SL483) protein is Glycine--tRNA ligase alpha subunit.